The sequence spans 473 residues: Sulfate adenylyltransferase subunit 1 (473 aa).

The tr-type G domain occupies 19–238; it reads KTLLKFLTCG…IKIKNSISSE (220 aa). A G1 region spans residues 28–35; that stretch reads GSVDDGKS. 28 to 35 contacts GTP; it reads GSVDDGKS. The tract at residues 86–90 is G2; that stretch reads GITID. The G3 stretch occupies residues 107–110; that stretch reads DTPG. Residues 107 to 111 and 162 to 165 contribute to the GTP site; these read DTPGH and NKMD. Residues 162-165 form a G4 region; sequence NKMD. Residues 200–202 are G5; it reads SAL.

It belongs to the TRAFAC class translation factor GTPase superfamily. Classic translation factor GTPase family. CysN/NodQ subfamily. As to quaternary structure, heterodimer composed of CysD, the smaller subunit, and CysN.

It carries out the reaction sulfate + ATP + H(+) = adenosine 5'-phosphosulfate + diphosphate. It participates in sulfur metabolism; hydrogen sulfide biosynthesis; sulfite from sulfate: step 1/3. With CysD forms the ATP sulfurylase (ATPS) that catalyzes the adenylation of sulfate producing adenosine 5'-phosphosulfate (APS) and diphosphate, the first enzymatic step in sulfur assimilation pathway. APS synthesis involves the formation of a high-energy phosphoric-sulfuric acid anhydride bond driven by GTP hydrolysis by CysN coupled to ATP hydrolysis by CysD. The chain is Sulfate adenylyltransferase subunit 1 from Buchnera aphidicola subsp. Acyrthosiphon pisum (strain APS) (Acyrthosiphon pisum symbiotic bacterium).